The primary structure comprises 179 residues: Embryo-specific protein ATS3A (179 aa).

The first 22 residues, 1-22 (MLRLAIPLFLFALCSFTLFSSA), serve as a signal peptide directing secretion. The PLAT domain occupies 48–158 (CSYTVIIKTS…NSVWYGFNVC (111 aa)).

Interacts with EULS3 (via N-terminus). As to expression, expressed in roots, rosette leaves, stems, cauline leaves and flowers.

It is found in the secreted. Its function is as follows. May play a role during embryo development. This Arabidopsis thaliana (Mouse-ear cress) protein is Embryo-specific protein ATS3A.